We begin with the raw amino-acid sequence, 130 residues long: uncharacterized protein (130 aa).

The interval 41-64 (DDKDDHMDNQPKTSQTSKKVKLSE) is disordered.

This is an uncharacterized protein from Streptococcus pyogenes serotype M6 (strain ATCC BAA-946 / MGAS10394).